A 120-amino-acid polypeptide reads, in one-letter code: Spermidine export protein MdtJ (120 aa).

Transmembrane regions (helical) follow at residues 1–21 (MFYWILLALAIVAEITGTLSM), 31–51 (AGYILMLVMITLSYIFLSFAV), 54–74 (IALGVAYALWEGIGILFITVF), and 81–101 (EVLSTMKIVGLLTLIVGIVLI).

Belongs to the drug/metabolite transporter (DMT) superfamily. Small multidrug resistance (SMR) (TC 2.A.7.1) family. MdtJ subfamily. In terms of assembly, forms a complex with MdtI.

It is found in the cell inner membrane. Catalyzes the excretion of spermidine. This Salmonella arizonae (strain ATCC BAA-731 / CDC346-86 / RSK2980) protein is Spermidine export protein MdtJ.